A 918-amino-acid polypeptide reads, in one-letter code: Isoleucine--tRNA ligase (918 aa).

The short motif at 57-67 is the 'HIGH' region element; that stretch reads PYANGDIHIGH. L-isoleucyl-5'-AMP is bound at residue E568. Residues 609-613 carry the 'KMSKS' region motif; it reads KMSKS. K612 contacts ATP. C894, C897, C909, and C912 together coordinate Zn(2+).

It belongs to the class-I aminoacyl-tRNA synthetase family. IleS type 1 subfamily. In terms of assembly, monomer. Zn(2+) serves as cofactor.

It is found in the cytoplasm. The catalysed reaction is tRNA(Ile) + L-isoleucine + ATP = L-isoleucyl-tRNA(Ile) + AMP + diphosphate. Functionally, catalyzes the attachment of isoleucine to tRNA(Ile). As IleRS can inadvertently accommodate and process structurally similar amino acids such as valine, to avoid such errors it has two additional distinct tRNA(Ile)-dependent editing activities. One activity is designated as 'pretransfer' editing and involves the hydrolysis of activated Val-AMP. The other activity is designated 'posttransfer' editing and involves deacylation of mischarged Val-tRNA(Ile). This chain is Isoleucine--tRNA ligase, found in Sulfurovum sp. (strain NBC37-1).